A 205-amino-acid polypeptide reads, in one-letter code: Inactive ribonuclease-like protein 9 (205 aa).

An N-terminal signal peptide occupies residues 1–26 (MMRTLITTHPLPLLLLPQQLLQLVQF). 2 disulfides stabilise this stretch: Cys-116-Cys-168 and Cys-123-Cys-130. N-linked (GlcNAc...) asparagine glycosylation is found at Asn-131 and Asn-143.

Belongs to the pancreatic ribonuclease family. As to expression, at the mRNA level, widely expressed. At protein level, restricted to epididymis. Expressed in spermatozoa (sperm head and neck), with higher levels on ejaculated and epididymal sperm than on testicular sperm (at protein level). Expressed in the epithelial cells of the epididymal tubule (at protein level). Not detected in muscle.

The protein resides in the secreted. Its function is as follows. Does not exhibit any ribonuclease activity. The chain is Inactive ribonuclease-like protein 9 (RNASE9) from Homo sapiens (Human).